Consider the following 467-residue polypeptide: MNMKKATIAATAGIAVTAFAAPTIASASTVVVEAGDTLWGIAQSKGTTVDAIKKANNLTTDKIVPGQKLQVNEVATEEKAEKSVSATWLNVRSGAGVDHSILTSIKGGTKVTVETTESNGWHKITYNDGKTGYVNGKYLTDKATSTPVVKQEVKKETTQQVKPATEAKTEVKQPTTQQTAPAPKAAETKEAPVVDQNATTHNVKSGDTIWALSVKYGVSVQDIMSWNNLSSSSIYVGQKLAIKQPTKTVAPKAETKTQAPAAEKQTAPAVKENSNANTATTEKKETATEQQTTTKAPTQAAKPAPAPSTNTNKTNTTNNNTNASTPSKNTNTNTNTNTNTNTNQGSTNNASASALIAEAQKHLGKAYSWGGNGPTTFDCSGFTKYVFAKSGISLPRTSGAQYASTTRISESQAKPGDLVFFDYGSGISHVGIYVGNGQMINAQDNGVKYDNIHGAGWGKFLVGFGRV.

The signal sequence occupies residues 1-27 (MNMKKATIAATAGIAVTAFAAPTIASA). A LysM 1 domain is found at 28–71 (STVVVEAGDTLWGIAQSKGTTVDAIKKANNLTTDKIVPGQKLQV). Residues 79–143 (KAEKSVSATW…VNGKYLTDKA (65 aa)) form the SH3b domain. Disordered regions lie at residues 154–199 (KKET…QNAT) and 247–348 (KTVA…GSTN). Positions 172 to 185 (KQPTTQQTAPAPKA) are enriched in low complexity. In terms of domain architecture, LysM 2 spans 199-242 (TTHNVKSGDTIWALSVKYGVSVQDIMSWNNLSSSSIYVGQKLAI). A compositionally biased stretch (low complexity) spans 288-348 (TEQQTTTKAP…NTNTNQGSTN (61 aa)). Residues 330-343 (TNTNTNTNTNTNTN) are 7 X 2 AA tandem repeats of T-N. Residues 349–467 (NASASALIAE…GKFLVGFGRV (119 aa)) enclose the NlpC/P60 domain. The Nucleophile role is filled by cysteine 379. Histidine 429 functions as the Proton acceptor in the catalytic mechanism. Asparagine 441 is an active-site residue.

This sequence belongs to the peptidase C40 family.

Functionally, this major extracellular protein may be involved in the invasion of non-professional phagocytic cells by Listeria. This chain is Probable endopeptidase p60 (iap), found in Listeria innocua serovar 6a (strain ATCC BAA-680 / CLIP 11262).